The sequence spans 300 residues: Actin-related protein 2/3 complex subunit 2-B (300 aa).

It belongs to the ARPC2 family. In terms of assembly, component of the Arp2/3 complex composed of actr2/arp2, actr3/arp3, arpc1 (arpc1a or arpc1b), arpc2, arpc3, arpc4 and arpc5.

The protein localises to the cytoplasm. The protein resides in the cytoskeleton. Its subcellular location is the cell projection. It is found in the nucleus. In terms of biological role, actin-binding component of the Arp2/3 complex, a multiprotein complex that mediates actin polymerization upon stimulation by nucleation-promoting factor (NPF). The Arp2/3 complex mediates the formation of branched actin networks in the cytoplasm, providing the force for cell motility. In addition to its role in the cytoplasmic cytoskeleton, the Arp2/3 complex also promotes actin polymerization in the nucleus, thereby regulating gene transcription and repair of damaged DNA. The Arp2/3 complex promotes homologous recombination (HR) repair in response to DNA damage by promoting nuclear actin polymerization, leading to drive motility of double-strand breaks (DSBs). This Xenopus laevis (African clawed frog) protein is Actin-related protein 2/3 complex subunit 2-B (arpc2-b).